The sequence spans 275 residues: Large ribosomal subunit protein uL2 (275 aa).

The segment at 221-275 is disordered; it reads RGMTMNPVDHPMGGGEGRSKGHIPQSPWGIPAKGYKTRKSKKPSDKLIVKRRKQK.

The protein belongs to the universal ribosomal protein uL2 family. In terms of assembly, part of the 50S ribosomal subunit. Forms a bridge to the 30S subunit in the 70S ribosome.

In terms of biological role, one of the primary rRNA binding proteins. Required for association of the 30S and 50S subunits to form the 70S ribosome, for tRNA binding and peptide bond formation. It has been suggested to have peptidyltransferase activity; this is somewhat controversial. Makes several contacts with the 16S rRNA in the 70S ribosome. In Kosmotoga olearia (strain ATCC BAA-1733 / DSM 21960 / TBF 19.5.1), this protein is Large ribosomal subunit protein uL2.